Here is an 833-residue protein sequence, read N- to C-terminus: Multiphosphoryl transfer protein 2 (833 aa).

The region spanning 2–91 (ALIVEFICEL…QWLRDEFPHC (90 aa)) is the HPr domain. H16 functions as the Tele-phosphohistidine intermediate; for HPr activity in the catalytic mechanism. At H16 the chain carries Phosphohistidine; by EI. The tract at residues 143-653 (LGNLPAAKGV…AAKARMAQLD (511 aa)) is PTS EI. H301 (tele-phosphohistidine intermediate; for PTS EI activity) is an active-site residue. H301 carries the post-translational modification Phosphohistidine; by autocatalysis. Phosphoenolpyruvate contacts are provided by R408 and R444. Mg(2+)-binding residues include E543 and D567. Phosphoenolpyruvate is bound by residues 566–567 (ND) and R577. C614 acts as the Proton donor; for EI activity in catalysis. Positions 688 to 830 (PLVTAECITL…DAIASLLQHE (143 aa)) constitute a PTS EIIA type-2 domain. The active-site Tele-phosphohistidine intermediate; for PTS EIIA activity is the H750. Residue H750 is modified to Phosphohistidine; by HPr.

This sequence belongs to the PEP-utilizing enzyme family. It depends on Mg(2+) as a cofactor.

The protein resides in the cytoplasm. It catalyses the reaction L-histidyl-[protein] + phosphoenolpyruvate = N(pros)-phospho-L-histidyl-[protein] + pyruvate. It carries out the reaction D-fructose(out) + N(pros)-phospho-L-histidyl-[protein] = D-fructose 1-phosphate(in) + L-histidyl-[protein]. In terms of biological role, multifunctional protein that includes general (non sugar-specific) and sugar-specific components of the phosphoenolpyruvate-dependent sugar phosphotransferase system (sugar PTS). This major carbohydrate active transport system catalyzes the phosphorylation of incoming sugar substrates concomitantly with their translocation across the cell membrane. The enzyme II FrwABC PTS system is involved in fructose transport. The protein is Multiphosphoryl transfer protein 2 of Escherichia coli (strain K12).